Here is a 61-residue protein sequence, read N- to C-terminus: Large ribosomal subunit protein eL37 (61 aa).

Zn(2+) contacts are provided by Cys-18, Cys-21, Cys-33, and Cys-36. The segment at 18 to 36 (CRRCGRNAYNPTKKYCASC) adopts a C4-type zinc-finger fold.

Belongs to the eukaryotic ribosomal protein eL37 family. It depends on Zn(2+) as a cofactor.

Functionally, binds to the 23S rRNA. This is Large ribosomal subunit protein eL37 from Methanosphaera stadtmanae (strain ATCC 43021 / DSM 3091 / JCM 11832 / MCB-3).